The sequence spans 334 residues: L-lactate dehydrogenase B-A chain (334 aa).

Residues 30-58 (GQVG…VEDR) and Arg100 each bind NAD(+). 3 residues coordinate substrate: Arg107, Asn139, and Arg170. Asn139 provides a ligand contact to NAD(+). His194 (proton acceptor) is an active-site residue. Thr249 contributes to the substrate binding site.

This sequence belongs to the LDH/MDH superfamily. LDH family. Homotetramer.

Its subcellular location is the cytoplasm. It catalyses the reaction (S)-lactate + NAD(+) = pyruvate + NADH + H(+). It participates in fermentation; pyruvate fermentation to lactate; (S)-lactate from pyruvate: step 1/1. The chain is L-lactate dehydrogenase B-A chain (ldhba) from Danio rerio (Zebrafish).